A 440-amino-acid polypeptide reads, in one-letter code: Adenylosuccinate synthetase (440 aa).

Residues 12-18 and 40-42 contribute to the GTP site; these read GDEGKGK and GHT. Catalysis depends on D13, which acts as the Proton acceptor. Positions 13 and 40 each coordinate Mg(2+). IMP-binding positions include 13–16, 38–41, T128, R142, Q223, T238, and R302; these read DEGK and NAGH. The active-site Proton donor is H41. Residue 298–304 coordinates substrate; the sequence is TTTGRPR. Residues R304, 330–332, and 412–414 contribute to the GTP site; these read KLD and SVG.

This sequence belongs to the adenylosuccinate synthetase family. In terms of assembly, homodimer. Requires Mg(2+) as cofactor.

It is found in the cytoplasm. It catalyses the reaction IMP + L-aspartate + GTP = N(6)-(1,2-dicarboxyethyl)-AMP + GDP + phosphate + 2 H(+). It participates in purine metabolism; AMP biosynthesis via de novo pathway; AMP from IMP: step 1/2. In terms of biological role, plays an important role in the de novo pathway of purine nucleotide biosynthesis. Catalyzes the first committed step in the biosynthesis of AMP from IMP. The sequence is that of Adenylosuccinate synthetase from Gloeobacter violaceus (strain ATCC 29082 / PCC 7421).